We begin with the raw amino-acid sequence, 346 residues long: Outer membrane protein A (346 aa).

The N-terminal stretch at 1–21 (MKKTAIAIAVALAGFATVAQA) is a signal peptide. Beta stranded transmembrane passes span 27 to 37 (TWYTGAKLGWS), 55 to 66 (QLGAGAFGGYQV), 70 to 78 (VGFEMGYDW), 96 to 107 (QGVQLTAKLGYP), 112 to 120 (LDIYTRLGG), 142 to 151 (PVFAGGVEYA), 156 to 163 (IATRLEYQ), and 182 to 190 (MLSLGVSYR). Residues 197–208 (APVVAPAPAPAP) are hinge-like. 4 tandem repeats follow at residues 201–202 (AP), 203–204 (AP), 205–206 (AP), and 207–208 (AP). A 4 X 2 AA tandem repeats of A-P region spans residues 201-208 (APAPAPAP). The region spanning 210–338 (VQTKHFTLKS…RVEIEVKGIK (129 aa)) is the OmpA-like domain. A disulfide bridge connects residues Cys-311 and Cys-323.

The protein belongs to the outer membrane OOP (TC 1.B.6) superfamily. OmpA family. As to quaternary structure, monomer and homodimer.

Its subcellular location is the cell outer membrane. In terms of biological role, with TolR probably plays a role in maintaining the position of the peptidoglycan cell wall in the periplasm. Acts as a porin with low permeability that allows slow penetration of small solutes; an internal gate slows down solute passage. Functionally, required for conjugation with F-type plasmids; probably serves as the mating receptor on recipient cells. This is Outer membrane protein A from Escherichia coli O157:H7.